A 226-amino-acid polypeptide reads, in one-letter code: MHYYLIEARAPLYSVKVVDVYQVASAYPLPTPHAVVGALGAAMAHAGMCRGLQCMKEAEGLVVAARPAAVGELAKFPAVLWRTRGVLEDKSLPAGLEDYAGARDAMVREYVYAHAVKILLVTRKRVPQHVIRLMARLGDSESYVSVVDVLEGKPRECGGLVNVAVRAAKARRGSYTLYRALDERGNRELFAYPVVEEGGVYRRGGVEVGSKVLCLGEAVFPEGDGW.

It belongs to the CRISPR-associated protein Cas5 family. Subtype I-A/Apern subfamily. In terms of assembly, can form a Cascade complex with Csa5, Cas7, Cas3, Cas3' and Cas8a2.

In terms of biological role, CRISPR (clustered regularly interspaced short palindromic repeat) is an adaptive immune system that provides protection against mobile genetic elements (viruses, transposable elements and conjugative plasmids). CRISPR clusters contain spacers, sequences complementary to antecedent mobile elements, and target invading nucleic acids. CRISPR clusters are transcribed and processed into CRISPR RNA (crRNA). The sequence is that of CRISPR-associated protein Cas5 (cas5a) from Thermoproteus tenax (strain ATCC 35583 / DSM 2078 / JCM 9277 / NBRC 100435 / Kra 1).